The sequence spans 101 residues: Omega-scoloptoxin(10)-Ssd1b (101 aa).

The first 23 residues, 1-23 (MNKLTIIFFTILLLTYIIVEKEA), serve as a signal peptide directing secretion.

Post-translationally, contains 3 disulfide bonds. In terms of tissue distribution, expressed by the venom gland.

Its subcellular location is the secreted. Its function is as follows. Voltage-gated calcium channel inhibitor. The polypeptide is Omega-scoloptoxin(10)-Ssd1b (Scolopendra dehaani (Thai centipede)).